The primary structure comprises 446 residues: Probable polyamine aminopropyl transferase (446 aa).

A unknown region spans residues 1-117 (MVEPAIGRNH…KRIACVVSAV (117 aa)). A disordered region spans residues 64–94 (GRGAERWHRSPRQANGRFSNQRYSSTSPNSS). Over residues 75 to 94 (RQANGRFSNQRYSSTSPNSS) the composition is skewed to polar residues. In terms of domain architecture, PABS spans 116 to 351 (AVIFVATSCV…ELFAKKPGSG (236 aa)). The segment at 118 to 353 (IFVATSCVSP…FAKKPGSGSE (236 aa)) is spermidine synthase. S-methyl-5'-thioadenosine-binding positions include Asn-147, Glu-226, and 251 to 252 (DG). Asp-269 functions as the Proton acceptor in the catalytic mechanism.

This sequence belongs to the spermidine/spermine synthase family. Homodimer or homotetramer.

It is found in the cytoplasm. The enzyme catalyses S-adenosyl 3-(methylsulfanyl)propylamine + putrescine = S-methyl-5'-thioadenosine + spermidine + H(+). It functions in the pathway amine and polyamine biosynthesis; spermidine biosynthesis; spermidine from putrescine: step 1/1. Functionally, catalyzes the irreversible transfer of a propylamine group from the amino donor S-adenosylmethioninamine (decarboxy-AdoMet) to putrescine (1,4-diaminobutane) to yield spermidine. The protein is Probable polyamine aminopropyl transferase (speE) of Bifidobacterium longum (strain NCC 2705).